The following is a 1270-amino-acid chain: Myosin-binding protein C, cardiac-type (1270 aa).

An N-acetylmethionine modification is found at Met-1. Residues 1–24 are disordered; that stretch reads MPEPGKKPVSAFNKKPRSAEVTAG. A phosphoserine mark is found at Ser-47 and Ser-72. The span at 94–105 shows a compositional bias: basic and acidic residues; sequence VTEPAPPEKAES. The tract at residues 94–152 is disordered; that stretch reads VTEPAPPEKAESEVAPGAPEEVPAPATELEESVSSPEGSVSVTQDGSAAEHQGAPDDPI. The segment covering 106–135 has biased composition (low complexity); the sequence is EVAPGAPEEVPAPATELEESVSSPEGSVSV. The Ig-like C2-type 1 domain occupies 151-254; the sequence is PIGLFLMRPQ…FDSCNFNLTV (104 aa). 4 residues coordinate Zn(2+): Gln-206, His-208, Glu-221, and His-223. A phosphoserine; by PKA and PKC mark is found at Ser-273, Ser-282, and Ser-302. 2 positions are modified to phosphoserine: Ser-307 and Ser-423. Ig-like C2-type domains are found at residues 358-448, 449-539, 540-629, and 641-767; these read STAF…VKEP, PVLI…VQEK, KLEV…HFME, and PKIH…VIDV. A disulfide bridge connects residues Cys-432 and Cys-439. Residues Ser-455 and Ser-546 each carry the phosphoserine modification. A Phosphothreonine modification is found at Thr-603. Residues 683–702 are disordered; it reads VTQGKKASAGPHPDAPEDAG. Fibronectin type-III domains are found at residues 770–866 and 868–963; these read APAA…IGPP and EPTH…VQEI. The Ig-like C2-type 6 domain maps to 967 to 1061; it reads PRLQLPRHLR…ATLILQIVDK (95 aa). A Fibronectin type-III 3 domain is found at 1064–1159; that stretch reads PPQDIRIVET…TKEPVFIPRP (96 aa). The 94-residue stretch at 1177 to 1270 folds into the Ig-like C2-type 7 domain; it reads PSFTQPLANR…ECRLEVRVPQ (94 aa). Arg-1237 carries the post-translational modification Omega-N-methylarginine.

Belongs to the immunoglobulin superfamily. MyBP family. Substrate for phosphorylation by PKA and PKC. Reversible phosphorylation appears to modulate contraction. Post-translationally, polyubiquitinated.

Functionally, thick filament-associated protein located in the crossbridge region of vertebrate striated muscle a bands. In vitro it binds MHC, F-actin and native thin filaments, and modifies the activity of actin-activated myosin ATPase. It may modulate muscle contraction or may play a more structural role. In Mus musculus (Mouse), this protein is Myosin-binding protein C, cardiac-type (Mybpc3).